We begin with the raw amino-acid sequence, 286 residues long: 2-dehydro-3-deoxyphosphooctonate aldolase (286 aa).

It belongs to the KdsA family.

It localises to the cytoplasm. It carries out the reaction D-arabinose 5-phosphate + phosphoenolpyruvate + H2O = 3-deoxy-alpha-D-manno-2-octulosonate-8-phosphate + phosphate. It participates in carbohydrate biosynthesis; 3-deoxy-D-manno-octulosonate biosynthesis; 3-deoxy-D-manno-octulosonate from D-ribulose 5-phosphate: step 2/3. Its pathway is bacterial outer membrane biogenesis; lipopolysaccharide biosynthesis. In Shewanella denitrificans (strain OS217 / ATCC BAA-1090 / DSM 15013), this protein is 2-dehydro-3-deoxyphosphooctonate aldolase.